Here is a 158-residue protein sequence, read N- to C-terminus: Transcriptional repressor NrdR (158 aa).

The tract at residues 1–22 (MRCPFCGSDDTQVKDSRPAEDN) is disordered. A zinc finger lies at 3-34 (CPFCGSDDTQVKDSRPAEDNSAIRRRRICPDC). A compositionally biased stretch (basic and acidic residues) spans 11-22 (TQVKDSRPAEDN). In terms of domain architecture, ATP-cone spans 49–139 (LTVLKKTGRK…VYRDFSHAED (91 aa)).

Belongs to the NrdR family. Requires Zn(2+) as cofactor.

Negatively regulates transcription of bacterial ribonucleotide reductase nrd genes and operons by binding to NrdR-boxes. This chain is Transcriptional repressor NrdR, found in Allorhizobium ampelinum (strain ATCC BAA-846 / DSM 112012 / S4) (Agrobacterium vitis (strain S4)).